A 639-amino-acid chain; its full sequence is 1-deoxy-D-xylulose-5-phosphate synthase (639 aa).

Residues His79 and 120–122 (GHS) contribute to the thiamine diphosphate site. Mg(2+) is bound at residue Asp151. Residues 152 to 153 (GS), Asn180, Tyr289, and Glu371 each bind thiamine diphosphate. Asn180 provides a ligand contact to Mg(2+).

Belongs to the transketolase family. DXPS subfamily. Homodimer. It depends on Mg(2+) as a cofactor. Thiamine diphosphate is required as a cofactor.

It catalyses the reaction D-glyceraldehyde 3-phosphate + pyruvate + H(+) = 1-deoxy-D-xylulose 5-phosphate + CO2. Its pathway is metabolic intermediate biosynthesis; 1-deoxy-D-xylulose 5-phosphate biosynthesis; 1-deoxy-D-xylulose 5-phosphate from D-glyceraldehyde 3-phosphate and pyruvate: step 1/1. Functionally, catalyzes the acyloin condensation reaction between C atoms 2 and 3 of pyruvate and glyceraldehyde 3-phosphate to yield 1-deoxy-D-xylulose-5-phosphate (DXP). The polypeptide is 1-deoxy-D-xylulose-5-phosphate synthase (Agrobacterium fabrum (strain C58 / ATCC 33970) (Agrobacterium tumefaciens (strain C58))).